Reading from the N-terminus, the 333-residue chain is Ketol-acid reductoisomerase (NADP(+)) (333 aa).

Positions 1–179 (MFYDDDADLT…GGTRAGVIKT (179 aa)) constitute a KARI N-terminal Rossmann domain. Residues 22 to 25 (YGSQ), K45, S48, S50, and 80 to 83 (DTAQ) each bind NADP(+). Residue H105 is part of the active site. Residue G131 participates in NADP(+) binding. Residues 180-325 (TFKDETETDL…KRLRDLMSWV (146 aa)) enclose the KARI C-terminal knotted domain. D188, E192, E224, and E228 together coordinate Mg(2+). Substrate is bound at residue S249.

This sequence belongs to the ketol-acid reductoisomerase family. It depends on Mg(2+) as a cofactor.

The enzyme catalyses (2R)-2,3-dihydroxy-3-methylbutanoate + NADP(+) = (2S)-2-acetolactate + NADPH + H(+). It carries out the reaction (2R,3R)-2,3-dihydroxy-3-methylpentanoate + NADP(+) = (S)-2-ethyl-2-hydroxy-3-oxobutanoate + NADPH + H(+). Its pathway is amino-acid biosynthesis; L-isoleucine biosynthesis; L-isoleucine from 2-oxobutanoate: step 2/4. It participates in amino-acid biosynthesis; L-valine biosynthesis; L-valine from pyruvate: step 2/4. Involved in the biosynthesis of branched-chain amino acids (BCAA). Catalyzes an alkyl-migration followed by a ketol-acid reduction of (S)-2-acetolactate (S2AL) to yield (R)-2,3-dihydroxy-isovalerate. In the isomerase reaction, S2AL is rearranged via a Mg-dependent methyl migration to produce 3-hydroxy-3-methyl-2-ketobutyrate (HMKB). In the reductase reaction, this 2-ketoacid undergoes a metal-dependent reduction by NADPH to yield (R)-2,3-dihydroxy-isovalerate. The polypeptide is Ketol-acid reductoisomerase (NADP(+)) (Mycobacterium avium).